The following is a 142-amino-acid chain: UPF0332 protein PH1297 (142 aa).

Belongs to the UPF0332 family.

This Pyrococcus horikoshii (strain ATCC 700860 / DSM 12428 / JCM 9974 / NBRC 100139 / OT-3) protein is UPF0332 protein PH1297.